Consider the following 480-residue polypeptide: Initiation-specific alpha-1,6-mannosyltransferase (480 aa).

Residues 1 to 15 (MSRKLSHLIATRKSK) are Cytoplasmic-facing. A helical; Signal-anchor for type II membrane protein membrane pass occupies residues 16 to 30 (TIVVTVLLIYSLLTF). Residues 31-480 (HLSNKRLLSQ…EDADKNAGHK (450 aa)) are Lumenal-facing. Residues 187–189 (DMD) carry the DXD motif motif. N-linked (GlcNAc...) asparagine glycans are attached at residues Asn203, Asn281, Asn341, and Asn393.

This sequence belongs to the glycosyltransferase 32 family. Requires Mn(2+) as cofactor. Post-translationally, glycosylated.

The protein localises to the endoplasmic reticulum membrane. It is found in the golgi apparatus membrane. The enzyme catalyses Transfers an alpha-D-mannosyl residue from GDP-mannose into lipid-linked oligosaccharide, forming an alpha-(1-&gt;6)-D-mannosyl-D-mannose linkage.. Its function is as follows. Mannosyltransferase involved in outer chain elongation of asparagine-linked oligosaccharides of the type Man(9)GlcNAc(2). Adds the first alpha-1,6-mannose to the Man(8)GlcNAc(2) and Man(9)GlcNAc(2), but not Man(5)GlcNAc(2), endoplasmic reticulum intermediates. Represents the first enzymatic event required for synthesis of outer chain mannose linkages on yeast secretory proteins. Also has the potential to transfer a second alpha-1,6-mannose to the Man(8)GlcNAc(2) core oligosaccharide. This Saccharomyces cerevisiae (strain ATCC 204508 / S288c) (Baker's yeast) protein is Initiation-specific alpha-1,6-mannosyltransferase.